The following is an 85-amino-acid chain: Protein Vpu (85 aa).

Residues Met-1–Leu-7 lie on the Extracellular side of the membrane. The helical transmembrane segment at Ala-8–Arg-28 threads the bilayer. The Cytoplasmic segment spans residues Ile-29–Leu-85.

Belongs to the HIV-1 VPU protein family. Homopentamer. Interacts with host CD4 and BRTC; these interactions induce proteasomal degradation of CD4. Interacts with host BST2; this interaction leads to the degradation of host BST2. Interacts with host FBXW11. Interacts with host AP1M1; this interaction plays a role in the mistrafficking and subsequent degradation of host BST2. Interacts with host RANBP2; this interaction allows Vpu to down-regulate host BLM sumoylation. Post-translationally, phosphorylated by host CK2. This phosphorylation is necessary for interaction with human BTRC and degradation of CD4.

The protein resides in the host membrane. Ion channel activity is inhibited by hexamethylene amiloride in vitro. Functionally, enhances virion budding by targeting host CD4 and Tetherin/BST2 to proteasome degradation. Degradation of CD4 prevents any unwanted premature interactions between viral Env and its host receptor CD4 in the endoplasmic reticulum. Degradation of antiretroviral protein Tetherin/BST2 is important for virion budding, as BST2 tethers new viral particles to the host cell membrane. Mechanistically, Vpu bridges either CD4 or BST2 to BTRC, a substrate recognition subunit of the Skp1/Cullin/F-box protein E3 ubiquitin ligase, induces their ubiquitination and subsequent proteasomal degradation. The alteration of the E3 ligase specificity by Vpu seems to promote the degradation of host IKBKB, leading to NF-kappa-B down-regulation and subsequent apoptosis. Acts as a viroporin that forms an oligomeric ion channel in membranes. Modulates the host DNA repair mechanisms to promote degradation of nuclear viral cDNA in cells that are already productively infected in order to suppress immune sensing and proviral hyper-integration (superinfection). Manipulates PML-NBs and modulates SUMOylation of host BLM protein thereby enhancing its DNA-end processing activity toward viral unintegrated linear DNA. Also inhibits RAD52-mediated homologous repair of viral cDNA, preventing the generation of dead-end circular forms of single copies of the long terminal repeat and permitting sustained nucleolytic attack. The chain is Protein Vpu from Human immunodeficiency virus type 1 group O (isolate MVP5180) (HIV-1).